Consider the following 60-residue polypeptide: Large ribosomal subunit protein uL30 (60 aa).

Belongs to the universal ribosomal protein uL30 family. As to quaternary structure, part of the 50S ribosomal subunit.

In Saccharopolyspora erythraea (strain ATCC 11635 / DSM 40517 / JCM 4748 / NBRC 13426 / NCIMB 8594 / NRRL 2338), this protein is Large ribosomal subunit protein uL30.